A 255-amino-acid chain; its full sequence is Hydroxyacylglutathione hydrolase (255 aa).

Residues H56, H58, D60, H61, H114, D133, and H171 each coordinate Zn(2+).

The protein belongs to the metallo-beta-lactamase superfamily. Glyoxalase II family. As to quaternary structure, monomer. It depends on Zn(2+) as a cofactor.

The catalysed reaction is an S-(2-hydroxyacyl)glutathione + H2O = a 2-hydroxy carboxylate + glutathione + H(+). It participates in secondary metabolite metabolism; methylglyoxal degradation; (R)-lactate from methylglyoxal: step 2/2. In terms of biological role, thiolesterase that catalyzes the hydrolysis of S-D-lactoyl-glutathione to form glutathione and D-lactic acid. In Rhodopseudomonas palustris (strain HaA2), this protein is Hydroxyacylglutathione hydrolase.